A 199-amino-acid polypeptide reads, in one-letter code: Small ribosomal subunit protein uS2 (199 aa).

This sequence belongs to the universal ribosomal protein uS2 family.

The chain is Small ribosomal subunit protein uS2 (rps2) from Thermoplasma acidophilum (strain ATCC 25905 / DSM 1728 / JCM 9062 / NBRC 15155 / AMRC-C165).